A 2620-amino-acid polypeptide reads, in one-letter code: Ubiquitin carboxyl-terminal hydrolase 24 (2620 aa).

In terms of domain architecture, UBA spans 3–44; it reads SEEEQHMTTLLCMGFSDPATIRKALRLAKNDINEAVALLTNE. Residues 45–102 form a disordered region; that stretch reads RPGLDYGGYEPMDSGGGPSPGPGGGPRGDGGGDGGGGGPSRGGSTGGGGGFDPPPAYH. Over residues 58–95 the composition is skewed to gly residues; that stretch reads SGGGPSPGPGGGPRGDGGGDGGGGGPSRGGSTGGGGGF. S63 and S88 each carry phosphoserine. Phosphotyrosine is present on Y942. 2 disordered regions span residues 1034–1054 and 1129–1151; these read TSGSGTPSGSSADSSTSSSSS and TLLSESSSQSSKSPSLSSKQQHQ. Over residues 1131 to 1151 the composition is skewed to low complexity; it reads LSESSSQSSKSPSLSSKQQHQ. S1141 and S1285 each carry phosphoserine. Residues 1689–2042 form the USP domain; that stretch reads VGLRNGGATC…NAYMLFYQRV (354 aa). C1698 acts as the Nucleophile in catalysis. The disordered stretch occupies residues 1921–1945; the sequence is ARQDSSSEVGENGRSVDQGGGGSPR. S1943 is modified (phosphoserine). H1970 (proton acceptor) is an active-site residue. Phosphoserine occurs at positions 2047, 2077, and 2561. Residues 2063–2090 are disordered; that stretch reads AEDLSLSAPSSPEISPQSSPRPHRPNND. Over residues 2069 to 2082 the composition is skewed to low complexity; it reads SAPSSPEISPQSSP. T2565 bears the Phosphothreonine mark. The tract at residues 2575-2620 is disordered; it reads EKEQSGSSNGSESSPANENGDRHLQQGSESPMMIGELRSDLDDVDP. The span at 2579 to 2592 shows a compositional bias: low complexity; it reads SGSSNGSESSPANE. S2604 carries the phosphoserine modification. The segment covering 2611-2620 has biased composition (basic and acidic residues); the sequence is LRSDLDDVDP.

The protein belongs to the peptidase C19 family. As to quaternary structure, (Microbial infection) Interacts with human cytomegalovirus protein UL38.

It carries out the reaction Thiol-dependent hydrolysis of ester, thioester, amide, peptide and isopeptide bonds formed by the C-terminal Gly of ubiquitin (a 76-residue protein attached to proteins as an intracellular targeting signal).. Its function is as follows. Ubiquitin-specific protease that regulates cell survival in various contexts through modulating the protein stability of some of its substrates including DDB2, MCL1 or TP53. Plays a positive role on ferritinophagy where ferritin is degraded in lysosomes and releases free iron. This Homo sapiens (Human) protein is Ubiquitin carboxyl-terminal hydrolase 24 (USP24).